A 301-amino-acid chain; its full sequence is tRNA uridine(34) hydroxylase (301 aa).

Residues 121 to 215 (RSDDVVLIDT…YLEEVPAENS (95 aa)) enclose the Rhodanese domain. The active-site Cysteine persulfide intermediate is the Cys-175.

This sequence belongs to the TrhO family.

The catalysed reaction is uridine(34) in tRNA + AH2 + O2 = 5-hydroxyuridine(34) in tRNA + A + H2O. Functionally, catalyzes oxygen-dependent 5-hydroxyuridine (ho5U) modification at position 34 in tRNAs. This Ruegeria pomeroyi (strain ATCC 700808 / DSM 15171 / DSS-3) (Silicibacter pomeroyi) protein is tRNA uridine(34) hydroxylase.